The chain runs to 448 residues: Homogentisate 1,2-dioxygenase (448 aa).

Histidine 303 serves as the catalytic Proton acceptor. Residues histidine 346 and glutamate 352 each contribute to the Fe cation site. Positions 361 and 382 each coordinate homogentisate. Histidine 382 provides a ligand contact to Fe cation.

It belongs to the homogentisate dioxygenase family. In terms of assembly, hexamer; dimer of trimers. Fe cation serves as cofactor.

It carries out the reaction homogentisate + O2 = 4-maleylacetoacetate + H(+). It functions in the pathway amino-acid degradation; L-phenylalanine degradation; acetoacetate and fumarate from L-phenylalanine: step 4/6. Involved in the catabolism of homogentisate (2,5-dihydroxyphenylacetate or 2,5-OH-PhAc), a central intermediate in the degradation of phenylalanine and tyrosine. Catalyzes the oxidative ring cleavage of the aromatic ring of homogentisate to yield maleylacetoacetate. The polypeptide is Homogentisate 1,2-dioxygenase (Rhodopseudomonas palustris (strain BisA53)).